We begin with the raw amino-acid sequence, 455 residues long: N(6)-adenosine-methyltransferase non-catalytic subunit METTL14 (455 aa).

A disordered region spans residues glutamine 21 to glutamate 96. Over residues serine 37–cysteine 51 the composition is skewed to basic and acidic residues. Over residues glutamate 69–glutamate 82 the composition is skewed to acidic residues. Interaction with METTL3 stretches follow at residues arginine 134–aspartate 135 and serine 236–glycine 237. Residues arginine 244–arginine 253 are positively charged region required for RNA-binding. Interaction with METTL3 regions lie at residues arginine 254 to aspartate 257 and lysine 277 to histidine 286. A positively charged region required for RNA-binding region spans residues arginine 296–arginine 297. Residues asparagine 307–aspartate 311 are interaction with METTL3. The disordered stretch occupies residues glutamate 392 to arginine 455. Over residues arginine 407 to alanine 421 the composition is skewed to gly residues. Basic and acidic residues predominate over residues arginine 423–glycine 441.

The protein belongs to the MT-A70-like family. As to quaternary structure, heterodimer; heterodimerizes with mettl3 to form an antiparallel heterodimer that constitutes an active methyltransferase. Component of the WMM complex, a N6-methyltransferase complex composed of a catalytic subcomplex, named MAC, and of an associated subcomplex, named MACOM. The MAC subcomplex is composed of mettl3 and mettl14.

The protein localises to the nucleus. The METTL3-METTL14 heterodimer forms a N6-methyltransferase complex that methylates adenosine residues at the N(6) position of some mRNAs and regulates the circadian clock, differentiation of embryonic stem cells and cortical neurogenesis. In the heterodimer formed with mettl3, mettl14 constitutes the RNA-binding scaffold that recognizes the substrate rather than the catalytic core. N6-methyladenosine (m6A), which takes place at the 5'-[AG]GAC-3' consensus sites of some mRNAs, plays a role in mRNA stability and processing. In Danio rerio (Zebrafish), this protein is N(6)-adenosine-methyltransferase non-catalytic subunit METTL14 (mettl14).